The sequence spans 125 residues: Cytochrome c' (125 aa).

Residues R10, E67, C116, C119, and H120 each coordinate heme c.

Homodimer. Post-translationally, binds 1 heme c group covalently per subunit.

Cytochrome c' is the most widely occurring bacterial c-type cytochrome. Cytochromes c' are high-spin proteins and the heme has no sixth ligand. Their exact function is not known. The polypeptide is Cytochrome c' (Pararhodospirillum photometricum (Rhodospirillum photometricum)).